A 215-amino-acid chain; its full sequence is LexA repressor (215 aa).

The H-T-H motif DNA-binding region spans 28 to 48 (RAEIAAELGFSSPNAAEEHLR). Catalysis depends on for autocatalytic cleavage activity residues serine 133 and lysine 170.

The protein belongs to the peptidase S24 family. As to quaternary structure, homodimer.

The enzyme catalyses Hydrolysis of Ala-|-Gly bond in repressor LexA.. In terms of biological role, represses a number of genes involved in the response to DNA damage (SOS response), including recA and lexA. In the presence of single-stranded DNA, RecA interacts with LexA causing an autocatalytic cleavage which disrupts the DNA-binding part of LexA, leading to derepression of the SOS regulon and eventually DNA repair. In Burkholderia cenocepacia (strain HI2424), this protein is LexA repressor.